A 209-amino-acid chain; its full sequence is Small ribosomal subunit protein eS1 (209 aa).

Belongs to the eukaryotic ribosomal protein eS1 family.

This Picrophilus torridus (strain ATCC 700027 / DSM 9790 / JCM 10055 / NBRC 100828 / KAW 2/3) protein is Small ribosomal subunit protein eS1.